Reading from the N-terminus, the 185-residue chain is Probable gluconokinase (185 aa).

11-18 (GVSGSGKS) is an ATP binding site.

This sequence belongs to the gluconokinase GntK/GntV family.

It catalyses the reaction D-gluconate + ATP = 6-phospho-D-gluconate + ADP + H(+). The protein operates within carbohydrate acid metabolism; D-gluconate degradation. The sequence is that of Probable gluconokinase (Idnk) from Rattus norvegicus (Rat).